A 688-amino-acid polypeptide reads, in one-letter code: DNA ligase (688 aa).

NAD(+) is bound by residues 42–46, 91–92, and Glu-128; these read DAEYD and SL. The active-site N6-AMP-lysine intermediate is the Lys-130. The NAD(+) site is built by Arg-151, Glu-188, Lys-305, and Lys-329. Zn(2+)-binding residues include Cys-423, Cys-426, Cys-441, and Cys-447. A BRCT domain is found at 608–688; sequence APQGVLAGKT…GMRKLLEGQL (81 aa).

It belongs to the NAD-dependent DNA ligase family. LigA subfamily. Mg(2+) is required as a cofactor. The cofactor is Mn(2+).

It carries out the reaction NAD(+) + (deoxyribonucleotide)n-3'-hydroxyl + 5'-phospho-(deoxyribonucleotide)m = (deoxyribonucleotide)n+m + AMP + beta-nicotinamide D-nucleotide.. In terms of biological role, DNA ligase that catalyzes the formation of phosphodiester linkages between 5'-phosphoryl and 3'-hydroxyl groups in double-stranded DNA using NAD as a coenzyme and as the energy source for the reaction. It is essential for DNA replication and repair of damaged DNA. The polypeptide is DNA ligase (Paraburkholderia phytofirmans (strain DSM 17436 / LMG 22146 / PsJN) (Burkholderia phytofirmans)).